The primary structure comprises 257 residues: Short chain dehydrogenase ausX (257 aa).

NADP(+) contacts are provided by Ile-11, Asp-57, Arg-119, Tyr-151, Lys-155, and Val-184. The active-site Proton acceptor is the Tyr-151. Residue Lys-155 is the Lowers pKa of active site Tyr of the active site.

It belongs to the short-chain dehydrogenases/reductases (SDR) family.

It functions in the pathway secondary metabolite biosynthesis; terpenoid biosynthesis. Functionally, short chain dehydrogenase; part of the gene cluster that mediates the biosynthesis of calidodehydroaustin, a fungal meroterpenoid. The first step of the pathway is the synthesis of 3,5-dimethylorsellinic acid by the polyketide synthase ausA. 3,5-dimethylorsellinic acid is then prenylated by the polyprenyl transferase ausN. Further epoxidation by the FAD-dependent monooxygenase ausM and cyclization by the probable terpene cyclase ausL lead to the formation of protoaustinoid A. Protoaustinoid A is then oxidized to spiro-lactone preaustinoid A3 by the combined action of the FAD-binding monooxygenases ausB and ausC, and the dioxygenase ausE. Acid-catalyzed keto-rearrangement and ring contraction of the tetraketide portion of preaustinoid A3 by ausJ lead to the formation of preaustinoid A4. The aldo-keto reductase ausK, with the help of ausH, is involved in the next step by transforming preaustinoid A4 into isoaustinone which is in turn hydroxylated by the P450 monooxygenase ausI to form austinolide. The cytochrome P450 monooxygenase ausG modifies austinolide to austinol. Austinol is further acetylated to austin by the O-acetyltransferase ausP, which spontaneously changes to dehydroaustin. The cytochrome P450 monooxygenase ausR then converts dehydroaustin is into 7-dehydrodehydroaustin. The hydroxylation catalyzed by ausR permits the O-acetyltransferase ausQ to add an additional acetyl group to the molecule, leading to the formation of acetoxydehydroaustin. The short chain dehydrogenase ausT catalyzes the reduction of the double bond present between carbon atoms 1 and 2 to convert 7-dehydrodehydroaustin into 1,2-dihydro-7-hydroxydehydroaustin. AusQ catalyzes not only an acetylation reaction but also the addition of the PKS ausV diketide product to 1,2-dihydro-7-hydroxydehydroaustin, forming precalidodehydroaustin. Finally, the iron/alpha-ketoglutarate-dependent dioxygenase converts precalidodehydroaustin into calidodehydroaustin. In Aspergillus calidoustus, this protein is Short chain dehydrogenase ausX.